We begin with the raw amino-acid sequence, 207 residues long: Imidazoleglycerol-phosphate dehydratase (207 aa).

The protein belongs to the imidazoleglycerol-phosphate dehydratase family.

The protein localises to the cytoplasm. The enzyme catalyses D-erythro-1-(imidazol-4-yl)glycerol 3-phosphate = 3-(imidazol-4-yl)-2-oxopropyl phosphate + H2O. The protein operates within amino-acid biosynthesis; L-histidine biosynthesis; L-histidine from 5-phospho-alpha-D-ribose 1-diphosphate: step 6/9. The sequence is that of Imidazoleglycerol-phosphate dehydratase (hisB) from Azospirillum brasilense.